A 314-amino-acid chain; its full sequence is Ribosomal protein L11 methyltransferase (314 aa).

4 residues coordinate S-adenosyl-L-methionine: Thr161, Gly182, Asp204, and Asn248.

Belongs to the methyltransferase superfamily. PrmA family.

Its subcellular location is the cytoplasm. It catalyses the reaction L-lysyl-[protein] + 3 S-adenosyl-L-methionine = N(6),N(6),N(6)-trimethyl-L-lysyl-[protein] + 3 S-adenosyl-L-homocysteine + 3 H(+). Its function is as follows. Methylates ribosomal protein L11. The sequence is that of Ribosomal protein L11 methyltransferase from Listeria innocua serovar 6a (strain ATCC BAA-680 / CLIP 11262).